A 1470-amino-acid chain; its full sequence is Collagen alpha-1(XVII) chain (1470 aa).

Disordered stretches follow at residues 1 to 155 (MDVT…PSTR), 167 to 193 (KGSR…GTVE), and 422 to 452 (SAEN…GGAS). Residues 1 to 476 (MDVTKKSKRD…CGSCCSWWKW (476 aa)) are Cytoplasmic-facing. The nonhelical region (NC16) stretch occupies residues 1–573 (MDVTKKSKRD…MTEQENGNLR (573 aa)). Residues 9–19 (RDGTEVTERIV) show a composition bias toward basic and acidic residues. Low complexity predominate over residues 60-74 (GSSGYINSSGSIRGN). Polar residues-rich tracts occupy residues 75–96 (ASTS…SPGS), 111–120 (EGSSSGNSSP), and 170–184 (RSAS…SNTL). The necessary for interaction with DST and for the recruitment of DST to hemidesmosome stretch occupies residues 146 to 231 (RLQSASPSTR…WSSTLPAGSS (86 aa)). The span at 430 to 452 (RGGGGGRGKGGGAGGGGGGGGAS) shows a compositional bias: gly residues. A helical; Signal-anchor for type II membrane protein membrane pass occupies residues 477–497 (LLGLLLTWLLLLGLLFGLIAL). At 498-1470 (AEEVRKLKAR…RRKRSIAIKP (973 aa)) the chain is on the extracellular side. At Ser-551 the chain carries Phosphoserine; by CK2. Disordered regions lie at residues 568 to 873 (ENGN…FLSS), 885 to 999 (GVDL…SSSG), 1159 to 1181 (DYRN…NAWS), 1194 to 1220 (TAGL…GVSA), and 1249 to 1298 (FIVG…TNGG). A triple-helical region region spans residues 574–1456 (GSPGPKGDMG…KGEKGDKGDQ (883 aa)). Pro residues predominate over residues 597 to 609 (PGIPGPLGHPGPE). 2 stretches are compositionally biased toward low complexity: residues 742–755 (EPGA…AGAD) and 781–803 (DPGK…PGRP). Residues 827–848 (PGPPGPPGAMGPPGPPGTPGPA) are compositionally biased toward pro residues. Residues 850–873 (PAGLPGQQGPRGEPGLAGDSFLSS) show a composition bias toward low complexity. Pro residues-rich tracts occupy residues 891–914 (PPGP…PRGP), 940–949 (PPGPPGPPGP), 982–992 (PPGPPGPPGPP), 1166–1175 (PPGPPGPPGM), 1201–1215 (PGPP…PRGP), and 1253–1262 (PPGPPGPQGP). N-linked (GlcNAc...) asparagine glycosylation is present at Asn-1273. Residues 1275–1290 (SSNSSARRGTSYSSST) show a composition bias toward low complexity. N-linked (GlcNAc...) asparagine glycosylation is present at Asn-1395. The segment at 1406-1470 (TYGTIPGPPG…RRKRSIAIKP (65 aa)) is disordered. Over residues 1434–1443 (PRGPPGPPGP) the composition is skewed to pro residues. Residues 1446-1455 (NKGEKGDKGD) show a composition bias toward basic and acidic residues. Positions 1457 to 1470 (VYTGRRKRSIAIKP) are nonhelical region (NC1). A compositionally biased stretch (basic residues) spans 1460–1470 (GRRKRSIAIKP).

Homotrimers of alpha 1(XVII)chains. Interacts (via cytoplasmic region) with ITGB4 (via cytoplasmic region). Interacts (via cytoplasmic region) with DST (via N-terminus). Interacts (via N-terminus) with PLEC. Interacts (via cytoplasmic region) with DSP. The intracellular/endo domain is disulfide-linked. In terms of processing, prolines at the third position of the tripeptide repeating unit (G-X-Y) are hydroxylated in some or all of the chains. Post-translationally, the ectodomain is shedded from the surface of keratinocytes resulting in a 120-kDa soluble form, also named as 120 kDa linear IgA disease antigen homolog. The shedding is mediated by membrane-bound metalloproteases. This cleavage is inhibited by phosphorylation at Ser-551.

It localises to the cell junction. The protein localises to the hemidesmosome. Its subcellular location is the membrane. The protein resides in the secreted. It is found in the extracellular space. It localises to the extracellular matrix. The protein localises to the basement membrane. May play a role in the integrity of hemidesmosome and the attachment of basal keratinocytes to the underlying basement membrane. In terms of biological role, the 120 kDa linear IgA disease antigen homolog is an anchoring filament component involved in dermal-epidermal cohesion. The sequence is that of Collagen alpha-1(XVII) chain (Col17a1) from Mus musculus (Mouse).